The chain runs to 608 residues: DNA mismatch repair protein MutL (608 aa).

Belongs to the DNA mismatch repair MutL/HexB family.

Functionally, this protein is involved in the repair of mismatches in DNA. It is required for dam-dependent methyl-directed DNA mismatch repair. May act as a 'molecular matchmaker', a protein that promotes the formation of a stable complex between two or more DNA-binding proteins in an ATP-dependent manner without itself being part of a final effector complex. The protein is DNA mismatch repair protein MutL of Elusimicrobium minutum (strain Pei191).